A 372-amino-acid chain; its full sequence is E3 ubiquitin-protein ligase RNF34 (372 aa).

An FYVE-type zinc finger spans residues Glu56–Glu107. The 20-residue stretch at Leu115–Thr134 folds into the SAP 1 domain. Ser169 carries the phosphoserine modification. The segment at Gln194–Arg252 is disordered. Over residues Asp201–Asn220 the composition is skewed to polar residues. A compositionally biased stretch (acidic residues) spans Thr221–Glu240. 2 positions are modified to phosphoserine: Ser254 and Ser256. The 15-residue stretch at Val264–Arg278 folds into the SAP 2 domain. Residues Cys325–Arg360 form an RING-type zinc finger.

As to quaternary structure, interacts with CASP8 and CASP10. Interacts with p53/TP53; involved in p53/TP53 ubiquitination. Interacts (via RING-type zinc finger) with MDM2; the interaction stabilizes MDM2. Interacts (via RING-type zinc finger) with PPARGC1A. Interacts with NOD1. In terms of processing, autoubiquitinated (in vitro). Proteolytically cleaved by caspases upon induction of apoptosis by TNF.

The protein localises to the cell membrane. The protein resides in the endomembrane system. It is found in the nucleus. It localises to the nucleus speckle. Its subcellular location is the cytoplasm. The protein localises to the cytosol. The catalysed reaction is S-ubiquitinyl-[E2 ubiquitin-conjugating enzyme]-L-cysteine + [acceptor protein]-L-lysine = [E2 ubiquitin-conjugating enzyme]-L-cysteine + N(6)-ubiquitinyl-[acceptor protein]-L-lysine.. The protein operates within protein modification; protein ubiquitination. Functionally, E3 ubiquitin-protein ligase that regulates several biological processes through the ubiquitin-mediated proteasomal degradation of various target proteins. Ubiquitinates the caspases CASP8 and CASP10, promoting their proteasomal degradation, to negatively regulate cell death downstream of death domain receptors in the extrinsic pathway of apoptosis. May mediate 'Lys-48'-linked polyubiquitination of RIPK1 and its subsequent proteasomal degradation thereby indirectly regulating the tumor necrosis factor-mediated signaling pathway. Negatively regulates p53/TP53 through its direct ubiquitination and targeting to proteasomal degradation. Indirectly, may also negatively regulate p53/TP53 through ubiquitination and degradation of SFN. Mediates PPARGC1A proteasomal degradation probably through ubiquitination thereby indirectly regulating the metabolism of brown fat cells. Possibly involved in innate immunity, through 'Lys-48'-linked polyubiquitination of NOD1 and its subsequent proteasomal degradation. The chain is E3 ubiquitin-protein ligase RNF34 (RNF34) from Pongo abelii (Sumatran orangutan).